Consider the following 397-residue polypeptide: ORC1-type DNA replication protein 1 (397 aa).

Residues 67 to 71, Tyr208, and Arg220 contribute to the ATP site; that span reads TGKTA.

This sequence belongs to the CDC6/cdc18 family.

Functionally, involved in regulation of DNA replication. This is ORC1-type DNA replication protein 1 (cdc6-1) from Sulfolobus acidocaldarius (strain ATCC 33909 / DSM 639 / JCM 8929 / NBRC 15157 / NCIMB 11770).